Reading from the N-terminus, the 364-residue chain is Phospho-N-acetylmuramoyl-pentapeptide-transferase (364 aa).

10 helical membrane passes run 3–23, 51–71, 80–100, 116–136, 154–174, 185–205, 229–249, 256–276, 281–301, and 341–361; these read AILF…RVAI, TMGG…AKLI, ALLL…DDFI, MIGL…SWLE, IGWI…IIAA, LDGL…FVNI, PLDL…FLWW, IFMG…LAIL, LLLI…MLQV, and FWII…AEWV.

This sequence belongs to the glycosyltransferase 4 family. MraY subfamily. The cofactor is Mg(2+).

It is found in the cell membrane. The enzyme catalyses UDP-N-acetyl-alpha-D-muramoyl-L-alanyl-gamma-D-glutamyl-meso-2,6-diaminopimeloyl-D-alanyl-D-alanine + di-trans,octa-cis-undecaprenyl phosphate = di-trans,octa-cis-undecaprenyl diphospho-N-acetyl-alpha-D-muramoyl-L-alanyl-D-glutamyl-meso-2,6-diaminopimeloyl-D-alanyl-D-alanine + UMP. It participates in cell wall biogenesis; peptidoglycan biosynthesis. Catalyzes the initial step of the lipid cycle reactions in the biosynthesis of the cell wall peptidoglycan: transfers peptidoglycan precursor phospho-MurNAc-pentapeptide from UDP-MurNAc-pentapeptide onto the lipid carrier undecaprenyl phosphate, yielding undecaprenyl-pyrophosphoryl-MurNAc-pentapeptide, known as lipid I. The polypeptide is Phospho-N-acetylmuramoyl-pentapeptide-transferase (Nocardioides sp. (strain ATCC BAA-499 / JS614)).